Consider the following 1317-residue polypeptide: DNA-directed RNA polymerase subunit beta' (1317 aa).

C60, C62, C75, and C78 together coordinate Zn(2+). Mg(2+) is bound by residues D535, D537, and D539. C890, C967, C974, and C977 together coordinate Zn(2+).

The protein belongs to the RNA polymerase beta' chain family. In terms of assembly, the RNAP catalytic core consists of 2 alpha, 1 beta, 1 beta' and 1 omega subunit. When a sigma factor is associated with the core the holoenzyme is formed, which can initiate transcription. Mg(2+) serves as cofactor. The cofactor is Zn(2+).

It carries out the reaction RNA(n) + a ribonucleoside 5'-triphosphate = RNA(n+1) + diphosphate. In terms of biological role, DNA-dependent RNA polymerase catalyzes the transcription of DNA into RNA using the four ribonucleoside triphosphates as substrates. The sequence is that of DNA-directed RNA polymerase subunit beta' from Nocardia farcinica (strain IFM 10152).